The chain runs to 232 residues: Aspartate racemase (232 aa).

A substrate-binding site is contributed by 49-51 (DRT). Catalysis depends on Cys84, which acts as the Proton donor/acceptor. Substrate is bound by residues 85–87 (NTA) and Lys166. The active-site Proton donor/acceptor is the Cys195.

This sequence belongs to the aspartate/glutamate racemases family.

The enzyme catalyses L-aspartate = D-aspartate. The polypeptide is Aspartate racemase (Thermococcus sp. (strain KS-8)).